Consider the following 214-residue polypeptide: Pyridoxine/pyridoxamine 5'-phosphate oxidase (214 aa).

Substrate-binding positions include 9-12 (RKNY) and Lys-67. FMN is bound by residues 62–67 (RMVLLK), 77–78 (YT), Lys-84, and Gln-106. Substrate-binding residues include Tyr-124, Arg-128, and Ser-132. FMN is bound by residues 141 to 142 (QS) and Trp-186. A substrate-binding site is contributed by 192–194 (RLH). FMN is bound at residue Arg-196.

This sequence belongs to the pyridoxamine 5'-phosphate oxidase family. As to quaternary structure, homodimer. FMN is required as a cofactor.

The enzyme catalyses pyridoxamine 5'-phosphate + O2 + H2O = pyridoxal 5'-phosphate + H2O2 + NH4(+). The catalysed reaction is pyridoxine 5'-phosphate + O2 = pyridoxal 5'-phosphate + H2O2. It functions in the pathway cofactor metabolism; pyridoxal 5'-phosphate salvage; pyridoxal 5'-phosphate from pyridoxamine 5'-phosphate: step 1/1. Its pathway is cofactor metabolism; pyridoxal 5'-phosphate salvage; pyridoxal 5'-phosphate from pyridoxine 5'-phosphate: step 1/1. In terms of biological role, catalyzes the oxidation of either pyridoxine 5'-phosphate (PNP) or pyridoxamine 5'-phosphate (PMP) into pyridoxal 5'-phosphate (PLP). The chain is Pyridoxine/pyridoxamine 5'-phosphate oxidase from Gloeothece citriformis (strain PCC 7424) (Cyanothece sp. (strain PCC 7424)).